The chain runs to 434 residues: Iron transporter MagA (434 aa).

10 helical membrane passes run 6–26 (PELTYAAIVALAAVLCGGMMT), 31–51 (PAVVGYILAGVVLGPSGFGLV), 56–76 (AVATLAEFGVLMLLFVIGMKL), 86–106 (KTAIFTTVLQIAGSVGTALLL), 113–133 (SLGLAVVLGCAVAVSSTAVVI), 176–196 (LLPADMARVVLSVLFLVLLFW), 269–289 (SVLLMVFFLSIGLLLDFKFIW), 294–314 (TVLTLLAMVTLFKTALNVTAL), 321–341 (WPSAFLAGVALAQIGEFSFLL), and 357–377 (KLVVAVTVLSLVLSPFWLFTM).

Belongs to the monovalent cation:proton antiporter 2 (CPA2) transporter (TC 2.A.37) family.

The protein localises to the membrane. In terms of biological role, iron transporter, which is required for the synthesis of bacterial magnetic particles (BMPs). Probably involved in the transport of iron from the environment into the cytoplasm across the cell membrane, and then from the cytoplasm into the BMP lipid vesicle across the BMP membrane. The polypeptide is Iron transporter MagA (magA) (Paramagnetospirillum magneticum (strain ATCC 700264 / AMB-1) (Magnetospirillum magneticum)).